The primary structure comprises 205 residues: Cell wall / vacuolar inhibitor of fructosidase 1 (205 aa).

A signal peptide spans 1–23 (MKMMKVMMLIVMMMMVMVMVSEG). Cystine bridges form between C30-C39 and C93-C134. 2 N-linked (GlcNAc...) asparagine glycosylation sites follow: N139 and N156.

This sequence belongs to the PMEI family. In terms of tissue distribution, mostly expressed in roots, senescent leaves and flowers (in sepals), and, to a lower extent, in stems, specifically in the vascular tissues (e.g. in the phloem).

The protein resides in the vacuole. Inhibits fructosidases from vacuoles (vacuolar invertase VI). This is Cell wall / vacuolar inhibitor of fructosidase 1 (C/VIF1) from Arabidopsis thaliana (Mouse-ear cress).